Reading from the N-terminus, the 421-residue chain is Adenosylhomocysteinase (421 aa).

2 residues coordinate substrate: aspartate 128 and glutamate 153. Position 154-156 (154-156 (TTT)) interacts with NAD(+). Positions 183 and 187 each coordinate substrate. NAD(+)-binding positions include asparagine 188, 217–222 (GYGWCG), glutamate 240, 296–298 (AGH), and asparagine 343.

The protein belongs to the adenosylhomocysteinase family. It depends on NAD(+) as a cofactor.

The protein resides in the cytoplasm. It catalyses the reaction S-adenosyl-L-homocysteine + H2O = L-homocysteine + adenosine. It functions in the pathway amino-acid biosynthesis; L-homocysteine biosynthesis; L-homocysteine from S-adenosyl-L-homocysteine: step 1/1. May play a key role in the regulation of the intracellular concentration of adenosylhomocysteine. This Thermococcus kodakarensis (strain ATCC BAA-918 / JCM 12380 / KOD1) (Pyrococcus kodakaraensis (strain KOD1)) protein is Adenosylhomocysteinase.